The sequence spans 585 residues: Proline--tRNA ligase (585 aa).

This sequence belongs to the class-II aminoacyl-tRNA synthetase family. ProS type 1 subfamily. In terms of assembly, homodimer.

It localises to the cytoplasm. It carries out the reaction tRNA(Pro) + L-proline + ATP = L-prolyl-tRNA(Pro) + AMP + diphosphate. Catalyzes the attachment of proline to tRNA(Pro) in a two-step reaction: proline is first activated by ATP to form Pro-AMP and then transferred to the acceptor end of tRNA(Pro). As ProRS can inadvertently accommodate and process non-cognate amino acids such as alanine and cysteine, to avoid such errors it has two additional distinct editing activities against alanine. One activity is designated as 'pretransfer' editing and involves the tRNA(Pro)-independent hydrolysis of activated Ala-AMP. The other activity is designated 'posttransfer' editing and involves deacylation of mischarged Ala-tRNA(Pro). The misacylated Cys-tRNA(Pro) is not edited by ProRS. This Acidobacterium capsulatum (strain ATCC 51196 / DSM 11244 / BCRC 80197 / JCM 7670 / NBRC 15755 / NCIMB 13165 / 161) protein is Proline--tRNA ligase.